The chain runs to 490 residues: GTPase Der (490 aa).

EngA-type G domains lie at 3-166 and 203-376; these read PVVA…MDDV and IKLA…DSST. GTP-binding positions include 9-16, 56-60, 118-121, 209-216, 256-260, and 321-324; these read GRPNVGKS, DTGGI, NKTD, DTAGV, and NKWD. Residues 377 to 461 form the KH-like domain; the sequence is RRVSTAMLTR…PIRIQFKEGE (85 aa).

It belongs to the TRAFAC class TrmE-Era-EngA-EngB-Septin-like GTPase superfamily. EngA (Der) GTPase family. Associates with the 50S ribosomal subunit.

Functionally, GTPase that plays an essential role in the late steps of ribosome biogenesis. This is GTPase Der from Salmonella newport (strain SL254).